Reading from the N-terminus, the 336-residue chain is Fructose-1,6-bisphosphatase class 1 (336 aa).

Positions 92, 115, 117, and 118 each coordinate Mg(2+). Substrate-binding positions include 118 to 121 (DGSS), N211, Y244, 262 to 264 (YLY), and K274. Residue E280 coordinates Mg(2+).

Belongs to the FBPase class 1 family. In terms of assembly, homotetramer. The cofactor is Mg(2+).

It is found in the cytoplasm. It carries out the reaction beta-D-fructose 1,6-bisphosphate + H2O = beta-D-fructose 6-phosphate + phosphate. It participates in carbohydrate biosynthesis; gluconeogenesis. The polypeptide is Fructose-1,6-bisphosphatase class 1 (Hahella chejuensis (strain KCTC 2396)).